Reading from the N-terminus, the 351-residue chain is Foldase protein PrsA 1 (351 aa).

An N-terminal signal peptide occupies residues 1 to 22 (MKNSNKLIASVVTLASVMALAA). A lipid anchor (N-palmitoyl cysteine) is attached at Cys-23. The S-diacylglycerol cysteine moiety is linked to residue Cys-23. One can recognise a PpiC domain in the interval 145–240 (TPTMAVEMIT…KKFYIVKVTK (96 aa)). 2 stretches are compositionally biased toward low complexity: residues 303–317 (KTKA…SESS) and 326–351 (ESEQ…PAAQ). Residues 303–351 (KTKAASESSTTSESSKAAEENPSESEQTQTSSAEEPTETEAQTQEPAAQ) form a disordered region.

Belongs to the PrsA family.

It localises to the cell membrane. The enzyme catalyses [protein]-peptidylproline (omega=180) = [protein]-peptidylproline (omega=0). Plays a major role in protein secretion by helping the post-translocational extracellular folding of several secreted proteins. The chain is Foldase protein PrsA 1 (prsA1) from Streptococcus pyogenes serotype M1.